We begin with the raw amino-acid sequence, 337 residues long: Calcium-binding protein 39-like (337 aa).

This sequence belongs to the Mo25 family. As to quaternary structure, component of a trimeric complex composed of STK11/LKB1, STRAD (STRADA or STRADB) and CAB39/MO25 (CAB39/MO25alpha or CAB39L/MO25beta): the complex tethers STK11/LKB1 in the cytoplasm and stimulates its catalytic activity.

In terms of biological role, component of a complex that binds and activates STK11/LKB1. In the complex, required to stabilize the interaction between CAB39/MO25 (CAB39/MO25alpha or CAB39L/MO25beta) and STK11/LKB1. This chain is Calcium-binding protein 39-like (CAB39L), found in Homo sapiens (Human).